Consider the following 206-residue polypeptide: Large ribosomal subunit protein eL8 (206 aa).

Belongs to the eukaryotic ribosomal protein eL8 family. Component of the large ribosomal subunit.

The protein resides in the cytoplasm. The sequence is that of Large ribosomal subunit protein eL8 (RPL7A) from Encephalitozoon cuniculi (strain GB-M1) (Microsporidian parasite).